The primary structure comprises 506 residues: Histidine--tRNA ligase (506 aa).

It belongs to the class-II aminoacyl-tRNA synthetase family. As to quaternary structure, homodimer.

The protein localises to the cytoplasm. It catalyses the reaction tRNA(His) + L-histidine + ATP = L-histidyl-tRNA(His) + AMP + diphosphate + H(+). The chain is Histidine--tRNA ligase (hisS) from Bradyrhizobium diazoefficiens (strain JCM 10833 / BCRC 13528 / IAM 13628 / NBRC 14792 / USDA 110).